Here is a 381-residue protein sequence, read N- to C-terminus: Dual-specificity RNA methyltransferase RlmN (381 aa).

Glu-96 (proton acceptor) is an active-site residue. Residues 102-342 (TDDRGTLCVS…TRTTRGDDID (241 aa)) form the Radical SAM core domain. A disulfide bridge connects residues Cys-109 and Cys-345. Positions 116, 120, and 123 each coordinate [4Fe-4S] cluster. S-adenosyl-L-methionine is bound by residues 170 to 171 (GE), Ser-202, 224 to 226 (SLH), and Asn-302. Cys-345 (S-methylcysteine intermediate) is an active-site residue.

This sequence belongs to the radical SAM superfamily. RlmN family. [4Fe-4S] cluster serves as cofactor.

The protein resides in the cytoplasm. The enzyme catalyses adenosine(2503) in 23S rRNA + 2 reduced [2Fe-2S]-[ferredoxin] + 2 S-adenosyl-L-methionine = 2-methyladenosine(2503) in 23S rRNA + 5'-deoxyadenosine + L-methionine + 2 oxidized [2Fe-2S]-[ferredoxin] + S-adenosyl-L-homocysteine. It catalyses the reaction adenosine(37) in tRNA + 2 reduced [2Fe-2S]-[ferredoxin] + 2 S-adenosyl-L-methionine = 2-methyladenosine(37) in tRNA + 5'-deoxyadenosine + L-methionine + 2 oxidized [2Fe-2S]-[ferredoxin] + S-adenosyl-L-homocysteine. Functionally, specifically methylates position 2 of adenine 2503 in 23S rRNA and position 2 of adenine 37 in tRNAs. m2A2503 modification seems to play a crucial role in the proofreading step occurring at the peptidyl transferase center and thus would serve to optimize ribosomal fidelity. This chain is Dual-specificity RNA methyltransferase RlmN, found in Pseudomonas putida (strain GB-1).